Reading from the N-terminus, the 161-residue chain is Ribosome maturation factor RimP (161 aa).

The protein belongs to the RimP family.

The protein resides in the cytoplasm. Functionally, required for maturation of 30S ribosomal subunits. This chain is Ribosome maturation factor RimP, found in Rickettsia africae (strain ESF-5).